We begin with the raw amino-acid sequence, 407 residues long: Transcriptional regulator ICP22 homolog (407 aa).

The tract at residues 34 to 268 (RKRRRKLKPQ…STQPGGVPKL (235 aa)) is disordered. The segment covering 81–241 (EREGEGGEEG…EEAEEEEEEA (161 aa)) has biased composition (acidic residues).

Belongs to the herpesviridae ICP22 family.

The protein is Transcriptional regulator ICP22 homolog (73) of Saimiriine herpesvirus 2 (strain 11) (SaHV-2).